The chain runs to 456 residues: Bifunctional protein GlmU (456 aa).

Positions 1–229 (MLNNAMSVVI…LSEVEGVNNR (229 aa)) are pyrophosphorylase. Residues 11–14 (LAAG), K25, Q76, 81–82 (GT), 103–105 (YGD), G140, E154, N169, and N227 contribute to the UDP-N-acetyl-alpha-D-glucosamine site. D105 serves as a coordination point for Mg(2+). N227 contacts Mg(2+). Positions 230–250 (LQLSRLERVYQSEQAEKLLLA) are linker. The segment at 251-456 (GVMLRDPARF…EGWRRPVKKK (206 aa)) is N-acetyltransferase. 2 residues coordinate UDP-N-acetyl-alpha-D-glucosamine: R333 and K351. The Proton acceptor role is filled by H363. UDP-N-acetyl-alpha-D-glucosamine is bound by residues Y366 and N377. Residues A380, 386–387 (NY), S405, A423, and R440 contribute to the acetyl-CoA site.

This sequence in the N-terminal section; belongs to the N-acetylglucosamine-1-phosphate uridyltransferase family. It in the C-terminal section; belongs to the transferase hexapeptide repeat family. As to quaternary structure, homotrimer. It depends on Mg(2+) as a cofactor.

Its subcellular location is the cytoplasm. It carries out the reaction alpha-D-glucosamine 1-phosphate + acetyl-CoA = N-acetyl-alpha-D-glucosamine 1-phosphate + CoA + H(+). The enzyme catalyses N-acetyl-alpha-D-glucosamine 1-phosphate + UTP + H(+) = UDP-N-acetyl-alpha-D-glucosamine + diphosphate. It participates in nucleotide-sugar biosynthesis; UDP-N-acetyl-alpha-D-glucosamine biosynthesis; N-acetyl-alpha-D-glucosamine 1-phosphate from alpha-D-glucosamine 6-phosphate (route II): step 2/2. It functions in the pathway nucleotide-sugar biosynthesis; UDP-N-acetyl-alpha-D-glucosamine biosynthesis; UDP-N-acetyl-alpha-D-glucosamine from N-acetyl-alpha-D-glucosamine 1-phosphate: step 1/1. The protein operates within bacterial outer membrane biogenesis; LPS lipid A biosynthesis. In terms of biological role, catalyzes the last two sequential reactions in the de novo biosynthetic pathway for UDP-N-acetylglucosamine (UDP-GlcNAc). The C-terminal domain catalyzes the transfer of acetyl group from acetyl coenzyme A to glucosamine-1-phosphate (GlcN-1-P) to produce N-acetylglucosamine-1-phosphate (GlcNAc-1-P), which is converted into UDP-GlcNAc by the transfer of uridine 5-monophosphate (from uridine 5-triphosphate), a reaction catalyzed by the N-terminal domain. This is Bifunctional protein GlmU from Shigella sonnei (strain Ss046).